The following is a 316-amino-acid chain: Very long chain fatty acid elongase 6 (316 aa).

A glycan (N-linked (GlcNAc...) asparagine) is linked at N11. Helical transmembrane passes span 30 to 50 (WMLE…LVIF), 64 to 84 (LRGP…MGAA), 117 to 137 (FWTW…IFIV), 142 to 162 (PLIF…WFSY), 167 to 189 (SSAR…YYAL), and 202 to 222 (MIIT…NVWA). N242 carries N-linked (GlcNAc...) asparagine glycosylation. Residues 245 to 265 (IAMYSSYFVLFARFFYKAYLA) traverse the membrane as a helical segment.

This sequence belongs to the ELO family. ELOVL6 subfamily. As to expression, detected in the CNS (central nervous system) of third larval instar (at protein level). Expressed in cyst progenitor cells (at protein level). In the adult fly, expressed in several tissues including, sperm, follicular epithelium, nurse cells and cyst cells.

The protein localises to the mitochondrion outer membrane. The protein resides in the endoplasmic reticulum membrane. It catalyses the reaction a very-long-chain acyl-CoA + malonyl-CoA + H(+) = a very-long-chain 3-oxoacyl-CoA + CO2 + CoA. It carries out the reaction hexadecanoyl-CoA + malonyl-CoA + H(+) = 3-oxooctadecanoyl-CoA + CO2 + CoA. It participates in lipid metabolism; fatty acid biosynthesis. Functionally, catalyzes the first and rate-limiting reaction of the four reactions that constitute the long-chain fatty acids elongation cycle. This process allows the addition of 2 carbons to the chain of long- and very long-chain fatty acids (VLCFAs) per cycle. Condensing enzyme that elongates fatty acids with 12, 14 and 16 carbons with higher activity toward C16:0 acyl-CoAs. Catalyzes the synthesis of unsaturated C16 long chain fatty acids and, to a lesser extent, C18:0 and those with low desaturation degree. May participate in the production of saturated and monounsaturated VLCFAs of different chain lengths that are involved in multiple biological processes as precursors of membrane lipids and lipid mediators. The sequence is that of Very long chain fatty acid elongase 6 from Drosophila melanogaster (Fruit fly).